The sequence spans 189 residues: GTP cyclohydrolase 1 (189 aa).

Positions 78, 81, and 150 each coordinate Zn(2+).

Belongs to the GTP cyclohydrolase I family. Homomer.

The catalysed reaction is GTP + H2O = 7,8-dihydroneopterin 3'-triphosphate + formate + H(+). It functions in the pathway cofactor biosynthesis; 7,8-dihydroneopterin triphosphate biosynthesis; 7,8-dihydroneopterin triphosphate from GTP: step 1/1. The protein is GTP cyclohydrolase 1 of Listeria monocytogenes serotype 4b (strain CLIP80459).